A 630-amino-acid chain; its full sequence is Heat shock cognate 70 kDa protein 3 (630 aa).

The segment at 611-630 is disordered; that stretch reads FYQGNNNPKPTTTTFNQDLD. Low complexity predominate over residues 615 to 630; it reads NNNPKPTTTTFNQDLD.

Belongs to the heat shock protein 70 family.

Its function is as follows. May function in protein folding and assembly, and disassembly of protein complexes. The polypeptide is Heat shock cognate 70 kDa protein 3 (Dictyostelium discoideum (Social amoeba)).